The following is an 84-amino-acid chain: Putative lipoprotein RzoQ (84 aa).

The first 22 residues, 1-22, serve as a signal peptide directing secretion; that stretch reads MRNRNLLKFLPGLLICLIVLTS. A lipid anchor (N-palmitoyl cysteine) is attached at C23. C23 carries the S-diacylglycerol cysteine lipid modification.

The protein localises to the cell membrane. The chain is Putative lipoprotein RzoQ (rzoQ) from Escherichia coli (strain K12).